The following is a 280-amino-acid chain: Acyl-[acyl-carrier-protein]--UDP-N-acetylglucosamine O-acyltransferase (280 aa).

It belongs to the transferase hexapeptide repeat family. LpxA subfamily. As to quaternary structure, homotrimer.

It is found in the cytoplasm. The catalysed reaction is a (3R)-hydroxyacyl-[ACP] + UDP-N-acetyl-alpha-D-glucosamine = a UDP-3-O-[(3R)-3-hydroxyacyl]-N-acetyl-alpha-D-glucosamine + holo-[ACP]. It participates in glycolipid biosynthesis; lipid IV(A) biosynthesis; lipid IV(A) from (3R)-3-hydroxytetradecanoyl-[acyl-carrier-protein] and UDP-N-acetyl-alpha-D-glucosamine: step 1/6. Its function is as follows. Involved in the biosynthesis of lipid A, a phosphorylated glycolipid that anchors the lipopolysaccharide to the outer membrane of the cell. The sequence is that of Acyl-[acyl-carrier-protein]--UDP-N-acetylglucosamine O-acyltransferase from Chlamydia trachomatis serovar L2 (strain ATCC VR-902B / DSM 19102 / 434/Bu).